A 1235-amino-acid chain; its full sequence is DNA polymerase catalytic subunit (1235 aa).

Disordered stretches follow at residues Q640–R692 and A1098–P1134. Basic and acidic residues predominate over residues A650–E661. A compositionally biased stretch (acidic residues) spans E662 to E675. A compositionally biased stretch (basic and acidic residues) spans E676–G691.

This sequence belongs to the DNA polymerase type-B family. As to quaternary structure, forms a complex with the ssDNA-binding protein UL29, the DNA polymerase processivity factor, and the alkaline exonuclease. Interacts with the putative helicase-primase complex subunit UL8; this interaction may coordinate leading and lagging strand DNA synthesis at the replication fork.

It localises to the host nucleus. The catalysed reaction is DNA(n) + a 2'-deoxyribonucleoside 5'-triphosphate = DNA(n+1) + diphosphate. It carries out the reaction Endonucleolytic cleavage to 5'-phosphomonoester.. Its function is as follows. Replicates viral genomic DNA. The replication complex is composed of six viral proteins: the DNA polymerase, processivity factor, primase, primase-associated factor, helicase, and ssDNA-binding protein. Additionally, the polymerase contains an intrinsic ribonuclease H (RNase H) activity that specifically degrades RNA/DNA heteroduplexes or duplex DNA substrates in the 5' to 3' direction. Therefore, it can catalyze the excision of the RNA primers that initiate the synthesis of Okazaki fragments at a replication fork during viral DNA replication. The polypeptide is DNA polymerase catalytic subunit (Human herpesvirus 1 (strain Angelotti) (HHV-1)).